Here is a 549-residue protein sequence, read N- to C-terminus: Eukaryotic translation initiation factor 3 subunit D (549 aa).

A disordered region spans residues 101-130; the sequence is QSYQRGRARGQRGRGARGARTPGGMTTLNK. The span at 106-117 shows a compositional bias: basic residues; the sequence is GRARGQRGRGAR. Residues 277-291 form an RNA gate region; the sequence is EFDLLTVNETSVEPP. The segment at 521-549 is disordered; sequence ESDASEESGDEQADTPFAPLYSYGNSKRV. Residues 523 to 533 are compositionally biased toward acidic residues; sequence DASEESGDEQA.

The protein belongs to the eIF-3 subunit D family. In terms of assembly, component of the eukaryotic translation initiation factor 3 (eIF-3) complex.

The protein localises to the cytoplasm. In terms of biological role, mRNA cap-binding component of the eukaryotic translation initiation factor 3 (eIF-3) complex, which is involved in protein synthesis of a specialized repertoire of mRNAs and, together with other initiation factors, stimulates binding of mRNA and methionyl-tRNAi to the 40S ribosome. The eIF-3 complex specifically targets and initiates translation of a subset of mRNAs involved in cell proliferation. In the eIF-3 complex, eif3d specifically recognizes and binds the 7-methylguanosine cap of a subset of mRNAs. The sequence is that of Eukaryotic translation initiation factor 3 subunit D from Bombyx mori (Silk moth).